Consider the following 193-residue polypeptide: uncharacterized protein (193 aa).

Transmembrane regions (helical) follow at residues 8–28 (GVLV…VVAI), 46–66 (FFIA…VASA), 82–102 (GLSI…ALVV), and 141–161 (IALT…LLAA).

This sequence to M.leprae ML1222.

It is found in the cell membrane. This is an uncharacterized protein from Mycobacterium tuberculosis (strain CDC 1551 / Oshkosh).